The primary structure comprises 347 residues: D-alanine--D-alanine ligase (347 aa).

One can recognise an ATP-grasp domain in the interval 134-332; that stretch reads KLYAKDLGVK…LAQSLPKTPK (199 aa). Position 161 to 216 (161 to 216) interacts with ATP; the sequence is LMNFNFPFIIKPNNAGSSLGVNVVKEEKELVYALDGAFEYSKEVLIEPFIQGVKEY. Mg(2+) contacts are provided by D288, E300, and N302.

The protein belongs to the D-alanine--D-alanine ligase family. Mg(2+) is required as a cofactor. The cofactor is Mn(2+).

The protein localises to the cytoplasm. It carries out the reaction 2 D-alanine + ATP = D-alanyl-D-alanine + ADP + phosphate + H(+). The protein operates within cell wall biogenesis; peptidoglycan biosynthesis. Functionally, cell wall formation. The sequence is that of D-alanine--D-alanine ligase from Helicobacter pylori (strain ATCC 700392 / 26695) (Campylobacter pylori).